A 266-amino-acid polypeptide reads, in one-letter code: Interleukin-1 beta (266 aa).

Positions 1–113 (MATVPEPINE…ETSSDELLCD (113 aa)) are excised as a propeptide.

It belongs to the IL-1 family. In terms of assembly, monomer. In its precursor form, weakly interacts with full-length MEFV; the mature cytokine does not interact at all. Interacts with integrins ITGAV:ITGBV and ITGA5:ITGB1; integrin-binding is required for IL1B signaling. Interacts with cargo receptor TMED10; the interaction is direct and is required for the secretion of IL1B mature form. Interacts with HSP90AB1; the interaction facilitates cargo translocation into the ERGIC. Interacts with HSP90B1; the interaction facilitates cargo translocation into the ERGIC.

Its subcellular location is the cytoplasm. It localises to the cytosol. The protein resides in the secreted. It is found in the lysosome. The protein localises to the extracellular exosome. In terms of biological role, potent pro-inflammatory cytokine. Initially discovered as the major endogenous pyrogen, induces prostaglandin synthesis, neutrophil influx and activation, T-cell activation and cytokine production, B-cell activation and antibody production, and fibroblast proliferation and collagen production. Promotes Th17 differentiation of T-cells. Synergizes with IL12/interleukin-12 to induce IFNG synthesis from T-helper 1 (Th1) cells. Plays a role in angiogenesis by inducing VEGF production synergistically with TNF and IL6. Involved in transduction of inflammation downstream of pyroptosis: its mature form is specifically released in the extracellular milieu by passing through the gasdermin-D (GSDMD) pore. This Capra hircus (Goat) protein is Interleukin-1 beta (IL1B).